The sequence spans 255 residues: BTB/POZ domain-containing protein KCTD14 (255 aa).

The segment at 1 to 29 is disordered; the sequence is MWQGCAVERPVGRMTSQTPLPQSPRPRRP. Positions 33 to 130 constitute a BTB domain; the sequence is TVVELNVGGE…LLEDMPQIFG (98 aa).

The protein is BTB/POZ domain-containing protein KCTD14 (KCTD14) of Homo sapiens (Human).